A 253-amino-acid polypeptide reads, in one-letter code: Small ribosomal subunit protein eS6 (253 aa).

The interval 200-253 (KKRLAKRKQSENDYAKLLAQRKKESKVRRQEELKRRRSASMRDSKSSDKSAPQK) is disordered. Positions 226-247 (VRRQEELKRRRSASMRDSKSSD) are enriched in basic and acidic residues.

This sequence belongs to the eukaryotic ribosomal protein eS6 family. Component of the small ribosomal subunit. Part of the small subunit (SSU) processome, composed of more than 70 proteins and the RNA chaperone small nucleolar RNA (snoRNA) U3. Ribosomal protein S6 is the major substrate of protein kinases in eukaryote ribosomes.

The protein localises to the cytoplasm. It localises to the nucleus. The protein resides in the nucleolus. Its function is as follows. Component of the 40S small ribosomal subunit. Plays an important role in controlling cell growth and proliferation through the selective translation of particular classes of mRNA. Part of the small subunit (SSU) processome, first precursor of the small eukaryotic ribosomal subunit. During the assembly of the SSU processome in the nucleolus, many ribosome biogenesis factors, an RNA chaperone and ribosomal proteins associate with the nascent pre-rRNA and work in concert to generate RNA folding, modifications, rearrangements and cleavage as well as targeted degradation of pre-ribosomal RNA by the RNA exosome. The sequence is that of Small ribosomal subunit protein eS6 (RpS6) from Spodoptera frugiperda (Fall armyworm).